Here is an 878-residue protein sequence, read N- to C-terminus: Phosphoenolpyruvate carboxylase (878 aa).

Residues histidine 137 and lysine 545 contribute to the active site.

The protein belongs to the PEPCase type 1 family. Mg(2+) serves as cofactor.

It carries out the reaction oxaloacetate + phosphate = phosphoenolpyruvate + hydrogencarbonate. Forms oxaloacetate, a four-carbon dicarboxylic acid source for the tricarboxylic acid cycle. This is Phosphoenolpyruvate carboxylase from Proteus mirabilis (strain HI4320).